The chain runs to 151 residues: Small ribosomal subunit protein uS9 (151 aa).

This sequence belongs to the universal ribosomal protein uS9 family.

The chain is Small ribosomal subunit protein uS9 (RpS16) from Spodoptera frugiperda (Fall armyworm).